A 639-amino-acid polypeptide reads, in one-letter code: E3 ubiquitin-protein ligase HEL2 (639 aa).

Residues 1-55 (MSESVKENVTPTRNFRRTQGPQNNTKPHNDRKNFRRKQKKNNLSAEPNLTTSSAD) form a disordered region. Residue S2 is modified to N-acetylserine. Polar residues-rich tracts occupy residues 7 to 26 (ENVTPTRNFRRTQGPQNNTK) and 43 to 54 (LSAEPNLTTSSA). Phosphothreonine is present on T57. The RING-type zinc finger occupies 64 to 104 (CVICARKLTYVSLTPCHHKTCHICGFRQRALYNKKSCLICR). Residues 222–292 (PMCAFCSGKR…QTCLDNKFVV (71 aa)) enclose the LIM zinc-binding domain. Low complexity predominate over residues 343–354 (SISSLPGSSSGS). Disordered stretches follow at residues 343 to 367 (SISSLPGSSSGSRTDVRSASSPEES) and 550 to 631 (LESK…GKQK). S354 bears the Phosphoserine mark.

Belongs to the ZNF598/HEL2 family. In terms of assembly, interacts with the E2 ubiquitin-conjugating enzyme UBC4. Interacts with histones H3 and H4.

It localises to the cytoplasm. The enzyme catalyses S-ubiquitinyl-[E2 ubiquitin-conjugating enzyme]-L-cysteine + [acceptor protein]-L-lysine = [E2 ubiquitin-conjugating enzyme]-L-cysteine + N(6)-ubiquitinyl-[acceptor protein]-L-lysine.. The protein operates within protein modification; protein ubiquitination. Functionally, E3 ubiquitin-protein ligase that plays a key role in the ribosome quality control (RQC), a pathway that takes place when a ribosome has stalled during translation, leading to degradation of nascent peptide chains. HEL2 is activated when ribosomes are stalled within an mRNA following translation of prematurely polyadenylated mRNAs. Acts as a ribosome collision sensor: specifically recognizes and binds collided ribosome and ubiquitinates the 40S ribosomal proteins RPS20/uS10 and RPS3/uS3. Catalyzes 'Lys-63'-linked polyubiquitination of RPS20/uS10, promoting recruitment of the RQT (ribosome quality control trigger) complex, which drives the disassembly of stalled ribosomes, followed by degradation of nascent peptides. HEL2 also acts as an activator of the No-Go decay (NGD) pathway by mediating polyubiquitination of monoubiquitinated RPS3/uS3 and RPS7/es7: RPS3/uS3 and RPS7/es7 are first monoubiquitinated by MAG2 and MOT2/NOT4, respectively, and HEL2 mediates formation of 'Lys-63'-linked polyubiquitin chains on monoubiquitin, leading to activation of the NGD pathway in a CUE2-mediated endonucleolytic cleavage. Polyubiquitination of RPS3/uS3 also triggers degradation of non-functional 18S rRNA. The RQC pathway and the integrated stress response (ISR) antagonize each other: HEL2 prevents the activation of GCN2, while GCN2 suppresses RQC activation. The RQC pathway functions as a preventive quality control in the secretory pathway: HEL2 binds preferentially to the pre-engaged secretory ribosome-nascent chain complexes and prevents mistargeting of secretory proteins into mitochondria. Independently of its role in RQC, also involved in the polyubiquitination and proteasomal-degradation of excess histone proteins. This is E3 ubiquitin-protein ligase HEL2 from Saccharomyces cerevisiae (strain ATCC 204508 / S288c) (Baker's yeast).